The sequence spans 237 residues: Probable transcriptional regulatory protein PSHAa1370 (237 aa).

It belongs to the TACO1 family.

Its subcellular location is the cytoplasm. The chain is Probable transcriptional regulatory protein PSHAa1370 from Pseudoalteromonas translucida (strain TAC 125).